Reading from the N-terminus, the 137-residue chain is Small integral membrane protein 9 (137 aa).

A signal peptide spans 1–23 (MKPLKLFCIGLLLCPLVCLLLET). Over 24-84 (APPPSALLTL…NHLSDFFKSS (61 aa)) the chain is Extracellular. Residues 85 to 105 (IPPAAIFALFVTTAIMRAAIV) form a helical membrane-spanning segment. Over 106-137 (NKRLEEPHRQWTIDQRSSLEMQNMNLIKLFGG) the chain is Cytoplasmic.

It is found in the cell membrane. This chain is Small integral membrane protein 9 (Smim9), found in Mus musculus (Mouse).